The chain runs to 870 residues: Linoleate 9S-lipoxygenase 2 (870 aa).

Residues 32 to 158 (NDFGATVIDG…KYRYNRVFFS (127 aa)) enclose the PLAT domain. The Lipoxygenase domain maps to 161 to 870 (TSLPSKMPAA…ARGIPNSISI (710 aa)). The interval 203-243 (YNDLGEPDSGNPRPVLGGSPDRPYPRRGRTGRKPTKTDPTA) is disordered. Positions 227-236 (PRRGRTGRKP) are enriched in basic residues. 5 residues coordinate Fe cation: H525, H530, H716, N720, and I870.

This sequence belongs to the lipoxygenase family. In terms of assembly, monomer. Fe cation is required as a cofactor.

The protein resides in the cytoplasm. It catalyses the reaction (9Z,12Z)-octadecadienoate + O2 = (9S)-hydroperoxy-(10E,12Z)-octadecadienoate. It functions in the pathway lipid metabolism; oxylipin biosynthesis. Functionally, plant lipoxygenase may be involved in a number of diverse aspects of plant physiology including growth and development, pest resistance, and senescence or responses to wounding. Catalyzes the hydroperoxidation of lipids containing a cis,cis-1,4-pentadiene structure. This chain is Linoleate 9S-lipoxygenase 2 (LOX1.1), found in Oryza sativa subsp. japonica (Rice).